The primary structure comprises 264 residues: MDTRAIGFLDSGVGGLTVVCELIRQLPHEKIVYIGDSARAPYGPRPKKQIKEYTWELVNFLLTQNVKMIVFACNTATAVAWEEVKAALDIPVLGVILPGASAAIKSTTKGQVGVIGTPMTVASDIYRKKIQLLAPSVQVRSLACPKFVPIVESNEMCSSIAKKIVYDSLSPLVGKIDTLVLGCTHYPLLRPIIQNVMGPSVKLIDSGAECVRDISVLLNYFDINGNYHQKAVEHRFFTTANPEIFQEIASIWLKQKINVEHVTL.

Substrate is bound by residues 10–11 (DS) and 42–43 (YG). Cys-73 acts as the Proton donor/acceptor in catalysis. 74 to 75 (NT) lines the substrate pocket. Cys-183 (proton donor/acceptor) is an active-site residue. 184–185 (TH) contributes to the substrate binding site.

Belongs to the aspartate/glutamate racemases family.

The catalysed reaction is L-glutamate = D-glutamate. It functions in the pathway cell wall biogenesis; peptidoglycan biosynthesis. Functionally, provides the (R)-glutamate required for cell wall biosynthesis. The sequence is that of Glutamate racemase from Streptococcus pyogenes serotype M2 (strain MGAS10270).